A 212-amino-acid polypeptide reads, in one-letter code: uncharacterized protein (212 aa).

The active-site Acyl-thioester intermediate is the Cys-52. Active-site residues include His-89 and Asp-104.

Belongs to the arylamine N-acetyltransferase family.

This is an uncharacterized protein from Acanthamoeba polyphaga (Amoeba).